Consider the following 457-residue polypeptide: Bifunctional protein GlmU (457 aa).

A pyrophosphorylase region spans residues 1–229 (MDLAAVILAA…PVEVTGINDR (229 aa)). UDP-N-acetyl-alpha-D-glucosamine is bound by residues 8–11 (LAAG), Lys22, Gln72, and 77–78 (GT). Residue Asp102 coordinates Mg(2+). The UDP-N-acetyl-alpha-D-glucosamine site is built by Gly139, Glu154, Asn169, and Asn227. Asn227 lines the Mg(2+) pocket. The linker stretch occupies residues 230–250 (RQLAEVEKYLRRRVLEDLMQS). The N-acetyltransferase stretch occupies residues 251–457 (GVTVLDPAST…WAAKKRDKKV (207 aa)). Positions 332 and 350 each coordinate UDP-N-acetyl-alpha-D-glucosamine. The active-site Proton acceptor is the His362. Positions 365 and 376 each coordinate UDP-N-acetyl-alpha-D-glucosamine. Acetyl-CoA-binding positions include 385-386 (NY), Ser404, Ala422, and Arg439.

The protein in the N-terminal section; belongs to the N-acetylglucosamine-1-phosphate uridyltransferase family. This sequence in the C-terminal section; belongs to the transferase hexapeptide repeat family. As to quaternary structure, homotrimer. Requires Mg(2+) as cofactor.

It is found in the cytoplasm. The catalysed reaction is alpha-D-glucosamine 1-phosphate + acetyl-CoA = N-acetyl-alpha-D-glucosamine 1-phosphate + CoA + H(+). It carries out the reaction N-acetyl-alpha-D-glucosamine 1-phosphate + UTP + H(+) = UDP-N-acetyl-alpha-D-glucosamine + diphosphate. It participates in nucleotide-sugar biosynthesis; UDP-N-acetyl-alpha-D-glucosamine biosynthesis; N-acetyl-alpha-D-glucosamine 1-phosphate from alpha-D-glucosamine 6-phosphate (route II): step 2/2. It functions in the pathway nucleotide-sugar biosynthesis; UDP-N-acetyl-alpha-D-glucosamine biosynthesis; UDP-N-acetyl-alpha-D-glucosamine from N-acetyl-alpha-D-glucosamine 1-phosphate: step 1/1. Its pathway is bacterial outer membrane biogenesis; LPS lipid A biosynthesis. Its function is as follows. Catalyzes the last two sequential reactions in the de novo biosynthetic pathway for UDP-N-acetylglucosamine (UDP-GlcNAc). The C-terminal domain catalyzes the transfer of acetyl group from acetyl coenzyme A to glucosamine-1-phosphate (GlcN-1-P) to produce N-acetylglucosamine-1-phosphate (GlcNAc-1-P), which is converted into UDP-GlcNAc by the transfer of uridine 5-monophosphate (from uridine 5-triphosphate), a reaction catalyzed by the N-terminal domain. The protein is Bifunctional protein GlmU of Pelotomaculum thermopropionicum (strain DSM 13744 / JCM 10971 / SI).